A 215-amino-acid chain; its full sequence is MRTGIIAQKVGMTSVFNNNGKRVPLTLVKVDDCQVVGHKIAEKHGYNALVIGIKDKKISRVTKPMKQVFANAKVSPKTKLKEFRISEDNFIDIAASLEVDHFTAGQFIDVTATTIGKGFAGSMKRHNFRGLEASHGVSISHRSHGSTGQRQDPGKVFKGKKMAGHMGCSQVTIQNLKIFAIDKEQGLIMIQGSIPGHKGSYISIKDAIKKISITA.

At glutamine 151 the chain carries N5-methylglutamine.

The protein belongs to the universal ribosomal protein uL3 family. In terms of assembly, part of the 50S ribosomal subunit. Forms a cluster with proteins L14 and L19. Methylated by PrmB.

Functionally, one of the primary rRNA binding proteins, it binds directly near the 3'-end of the 23S rRNA, where it nucleates assembly of the 50S subunit. In Rickettsia bellii (strain OSU 85-389), this protein is Large ribosomal subunit protein uL3.